Consider the following 188-residue polypeptide: Thymidine kinase (188 aa).

Residue 17–24 (GPMFAGKT) participates in ATP binding. Glutamate 92 acts as the Proton acceptor in catalysis. Substrate is bound at residue phenylalanine 121. The Zn(2+) site is built by cysteine 146 and cysteine 149. 166 to 170 (LILAG) lines the substrate pocket. Zn(2+) is bound by residues cysteine 179 and cysteine 182.

This sequence belongs to the thymidine kinase family.

It carries out the reaction thymidine + ATP = dTMP + ADP + H(+). Phosphorylates thymidine. ASFV replicates in the cytoplasm of infected cells and contains genes encoding a number of enzymes needed for DNA synthesis, including thymidine kinase. Important for growth in swine macrophages in vitro and is a virus virulence factor in swine. The chain is Thymidine kinase from African swine fever virus (isolate Tick/South Africa/Pretoriuskop Pr4/1996) (ASFV).